Reading from the N-terminus, the 316-residue chain is MNTSITARELFDLQRDRLSLRWIAGQQGEHRQIDSGDTRARRPSLAGYLNTIYPNKVQILGTEELTWLDSLEPNKRKETIEKIIQFQPLTLVISKNQSCPEDMRTAADNSQIPLWVSPKRGHELLNHLSYHLARILAPRATLHGVFMEIYSIGVLITGEAGSGKSELALELLSRGHRLVADDAPEFTQIAPDVLDGTCPEILQDLLEVRGLGVLNVRHMFGDTAIKKNKYLRLIVHLTKPITEPTPSGYERLTGDSGTRHVLDLDVPLITLPVMPGRNLAVLTEAATRLHILRTKGIDPATMFIARHSNLLERRPP.

Active-site residues include H143 and K164. An ATP-binding site is contributed by 158–165 (GEAGSGKS). S165 is a Mg(2+) binding site. D182 serves as the catalytic Proton acceptor; for phosphorylation activity. Proton donor; for dephosphorylation activity. The tract at residues 206-215 (LEVRGLGVLN) is important for the catalytic mechanism of both phosphorylation and dephosphorylation. Residue E207 participates in Mg(2+) binding. The active site involves R251. The segment at 272–277 (PVMPGR) is important for the catalytic mechanism of dephosphorylation.

It belongs to the HPrK/P family. Homohexamer. It depends on Mg(2+) as a cofactor.

The catalysed reaction is [HPr protein]-L-serine + ATP = [HPr protein]-O-phospho-L-serine + ADP + H(+). It catalyses the reaction [HPr protein]-O-phospho-L-serine + phosphate + H(+) = [HPr protein]-L-serine + diphosphate. Its function is as follows. Catalyzes the ATP- as well as the pyrophosphate-dependent phosphorylation of a specific serine residue in HPr, a phosphocarrier protein of the phosphoenolpyruvate-dependent sugar phosphotransferase system (PTS). HprK/P also catalyzes the pyrophosphate-producing, inorganic phosphate-dependent dephosphorylation (phosphorolysis) of seryl-phosphorylated HPr (P-Ser-HPr). This is HPr kinase/phosphorylase from Xylella fastidiosa (strain 9a5c).